Consider the following 331-residue polypeptide: Acyl-CoA desaturase 1 (331 aa).

At 1-46 (MTEVDDGCGGRLRGSVLLEDECDLKQECETPTHSLVQGRDPPVVVV) the chain is on the cytoplasmic side. The chain crosses the membrane as a helical span at residues 47–67 (WRNVVLMSVLHTAAVYGLVLL). Asn49 lines the substrate pocket. At 68-71 (PSAS) the chain is on the lumenal side. A helical membrane pass occupies residues 72 to 90 (AYTLLAFCFVSSALGITAG). Residues 91 to 189 (AHRLWSHRSY…DRVVMFQRRF (99 aa)) lie on the Cytoplasmic side of the membrane. Fe cation-binding residues include His92 and His97. The Histidine box-1 signature appears at 92–97 (HRLWSH). Residues Asn120, Arg127, and Asp128 each coordinate substrate. Residues His129, His132, and His133 each contribute to the Fe cation site. The Histidine box-2 signature appears at 129–133 (HRVHH). Substrate is bound at residue Lys161. Residues 190-209 (YKHSVVVMCFLIPAMLPWFL) form a helical membrane-spanning segment. The Lumenal segment spans residues 210 to 213 (WAES). Residues 214-235 (LWVGYFVPVLLRYALVLNATWL) traverse the membrane as a helical segment. Residue Trp234 participates in substrate binding. Over 236 to 331 (VNSAAHMWGN…RTGDGSHRSG (96 aa)) the chain is Cytoplasmic. Residues His241, His270, His273, and His274 each contribute to the Fe cation site. A Histidine box-3 motif is present at residues 270-274 (HNYHH).

It belongs to the fatty acid desaturase type 1 family. Fe(2+) is required as a cofactor. Expression is highest in liver, followed by brain and intestine, and lowest in spleen. Also expressed in heart, gill and muscle.

The protein localises to the endoplasmic reticulum membrane. It carries out the reaction octadecanoyl-CoA + 2 Fe(II)-[cytochrome b5] + O2 + 2 H(+) = (9Z)-octadecenoyl-CoA + 2 Fe(III)-[cytochrome b5] + 2 H2O. In terms of biological role, stearoyl-CoA desaturase that utilizes O(2) and electrons from reduced cytochrome b5 to introduce the first double bond into saturated fatty acyl-CoA substrates. Catalyzes the insertion of a cis double bond at the delta-9 position into fatty acyl-CoA substrates including palmitoyl-CoA and stearoyl-CoA. Contributes to the biosynthesis of membrane phospholipids, cholesterol esters and triglycerides. This is Acyl-CoA desaturase 1 from Tachysurus fulvidraco (Yellow catfish).